We begin with the raw amino-acid sequence, 237 residues long: Urease accessory protein UreF (237 aa).

This sequence belongs to the UreF family. UreD, UreF and UreG form a complex that acts as a GTP-hydrolysis-dependent molecular chaperone, activating the urease apoprotein by helping to assemble the nickel containing metallocenter of UreC. The UreE protein probably delivers the nickel.

Its subcellular location is the cytoplasm. Its function is as follows. Required for maturation of urease via the functional incorporation of the urease nickel metallocenter. The protein is Urease accessory protein UreF of Streptococcus salivarius (strain 57.I).